The sequence spans 205 residues: Probable anaerobic dimethyl sulfoxide reductase chain YnfG (205 aa).

3 consecutive 4Fe-4S ferredoxin-type domains span residues 5–33 (YGFF…LGPE), 59–89 (FAYY…KRED), and 90–119 (GFVV…YNAE). [4Fe-4S] cluster-binding residues include C14, C17, C20, C24, C67, C70, C75, C79, C99, C102, C105, C109, C126, C129, C141, and C145. Positions 183–205 (IKPNANSRPTGDTTGYLANPEEV) are disordered. Polar residues predominate over residues 186 to 195 (NANSRPTGDT).

In terms of assembly, the complex consists of three subunits: YnfF, the reductase; YnfG, an electron transfer protein, and YnfH, a membrane anchor protein. It depends on [4Fe-4S] cluster as a cofactor.

In terms of biological role, electron transfer subunit of the terminal reductase during anaerobic growth on various sulfoxide and N-oxide compounds. The protein is Probable anaerobic dimethyl sulfoxide reductase chain YnfG (ynfG) of Escherichia coli O6:H1 (strain CFT073 / ATCC 700928 / UPEC).